A 754-amino-acid polypeptide reads, in one-letter code: Relaxin receptor 2 (754 aa).

Over M1 to N416 the chain is Extracellular. One can recognise an LDL-receptor class A domain in the interval S44–G81. Intrachain disulfides connect C45/C58, C52/C71, and C65/C80. N-linked (GlcNAc...) asparagine glycosylation is present at N54. The N-linked (GlcNAc...) asparagine glycan is linked to N138. LRR repeat units follow at residues N138 to K159, K162 to G183, N186 to D207, Q210 to G231, S234 to Q255, Q258 to S279, S282 to S303, N306 to D327, L330 to S351, and Q354 to P375. Residue N274 is glycosylated (N-linked (GlcNAc...) asparagine). N335 is a glycosylation site (N-linked (GlcNAc...) asparagine). N378 carries N-linked (GlcNAc...) asparagine glycosylation. Residues I417 to I437 traverse the membrane as a helical segment. Topologically, residues G438 to K455 are cytoplasmic. Residues I456 to I476 form a helical membrane-spanning segment. At K477–C495 the chain is on the extracellular side. The cysteines at positions 495 and 573 are disulfide-linked. The chain crosses the membrane as a helical span at residues R496 to L518. The Cytoplasmic segment spans residues E519 to Q537. The helical transmembrane segment at T538–W558 threads the bilayer. At N559–G592 the chain is on the extracellular side. The chain crosses the membrane as a helical span at residues I593–F613. Residues C614–R639 are Cytoplasmic-facing. A helical membrane pass occupies residues F640–L660. Over S661–T670 the chain is Extracellular. A helical transmembrane segment spans residues M671–Y691. The Cytoplasmic segment spans residues T692–S754.

Belongs to the G-protein coupled receptor 1 family. Expressed mainly in the brain, kidney, muscle, testis, thyroid, uterus, peripheral blood cells and bone marrow.

Its subcellular location is the cell membrane. Receptor for relaxin. The activity of this receptor is mediated by G proteins leading to stimulation of adenylate cyclase and an increase of cAMP. May also be a receptor for Leydig insulin-like peptide (INSL3). This is Relaxin receptor 2 (RXFP2) from Homo sapiens (Human).